Consider the following 489-residue polypeptide: Probable 26S proteasome non-ATPase regulatory subunit 3 (489 aa).

The interval 1–23 (MTQDVEMKEVPAPAPSNSVTAAT) is disordered. One can recognise a PCI domain in the interval 241 to 422 (CRYLFYLGKI…GWMVSKETGD (182 aa)). The disordered stretch occupies residues 454 to 489 (PANSHKDKESAEKRRERQQQEQELAKHIAEEDDDEF). The span at 457-482 (SHKDKESAEKRRERQQQEQELAKHIA) shows a compositional bias: basic and acidic residues.

Belongs to the proteasome subunit S3 family. As to quaternary structure, the 26S proteasome is composed of a core protease, known as the 20S proteasome, capped at one or both ends by the 19S regulatory complex (RC). The RC is composed of at least 18 different subunits in two subcomplexes, the base and the lid, which form the portions proximal and distal to the 20S proteolytic core, respectively.

The protein localises to the nucleus. Its function is as follows. Acts as a regulatory subunit of the 26 proteasome which is involved in the ATP-dependent degradation of ubiquitinated proteins. The sequence is that of Probable 26S proteasome non-ATPase regulatory subunit 3 (21D7) from Daucus carota (Wild carrot).